A 199-amino-acid polypeptide reads, in one-letter code: Probable chemoreceptor glutamine deamidase CheD (199 aa).

This sequence belongs to the CheD family.

It carries out the reaction L-glutaminyl-[protein] + H2O = L-glutamyl-[protein] + NH4(+). Its function is as follows. Probably deamidates glutamine residues to glutamate on methyl-accepting chemotaxis receptors (MCPs), playing an important role in chemotaxis. The protein is Probable chemoreceptor glutamine deamidase CheD of Cereibacter sphaeroides (strain ATCC 17029 / ATH 2.4.9) (Rhodobacter sphaeroides).